Consider the following 426-residue polypeptide: Serine--tRNA ligase (426 aa).

233-235 (TAE) serves as a coordination point for L-serine. 264-266 (RSE) provides a ligand contact to ATP. Glu287 is a binding site for L-serine. 351-354 (EISS) provides a ligand contact to ATP. Ser387 contributes to the L-serine binding site.

The protein belongs to the class-II aminoacyl-tRNA synthetase family. Type-1 seryl-tRNA synthetase subfamily. Homodimer. The tRNA molecule binds across the dimer.

The protein resides in the cytoplasm. The enzyme catalyses tRNA(Ser) + L-serine + ATP = L-seryl-tRNA(Ser) + AMP + diphosphate + H(+). It carries out the reaction tRNA(Sec) + L-serine + ATP = L-seryl-tRNA(Sec) + AMP + diphosphate + H(+). It functions in the pathway aminoacyl-tRNA biosynthesis; selenocysteinyl-tRNA(Sec) biosynthesis; L-seryl-tRNA(Sec) from L-serine and tRNA(Sec): step 1/1. Catalyzes the attachment of serine to tRNA(Ser). Is also able to aminoacylate tRNA(Sec) with serine, to form the misacylated tRNA L-seryl-tRNA(Sec), which will be further converted into selenocysteinyl-tRNA(Sec). The sequence is that of Serine--tRNA ligase from Clostridium botulinum (strain Kyoto / Type A2).